We begin with the raw amino-acid sequence, 339 residues long: Chromo domain-containing protein cec-3 (339 aa).

The disordered stretch occupies residues 1–21 (MSNEGSREESREPEAREGKSD). Residues 24–84 (FEVEKILAHK…KLKVTDKTEL (61 aa)) enclose the Chromo domain. The span at 91–105 (QIKKNKSQKSKKRSK) shows a compositional bias: basic residues. 2 disordered regions span residues 91 to 199 (QIKK…APLS) and 215 to 272 (EEKA…QRTL). Composition is skewed to basic and acidic residues over residues 106–117 (TVSDHESNHDSD) and 171–183 (AAMEVRDTRRNWL). Residues 184 to 193 (DEESSDDEAE) show a composition bias toward acidic residues. Residues 230-241 (KPREVVIKKDPS) are compositionally biased toward basic and acidic residues. Over residues 242–251 (ESPVASASSV) the composition is skewed to low complexity.

As to expression, expressed in every cell of the embryo (at protein level). In adults, expressed predominantly in the head region and the germline.

It localises to the chromosome. The protein resides in the nucleus. In terms of biological role, specifically recognizes and binds methylated 'Lys-9' of histone H3 (H3K9me), with highest preference for trimethylated 'Lys-9' (H3K9me3) followed by dimethylated 'Lys-9' (H3K9me2) followed by monomethylated 'Lys-9' (H3K9me1). Plays a role in maintaining correct unc-4 expression in the VC motor neurons where unc-4 is expressed in the vulval but not in the non-vulval VC neurons. This Caenorhabditis elegans protein is Chromo domain-containing protein cec-3 (cec-3).